The chain runs to 271 residues: Metal-staphylopine import system ATP-binding protein CntD (271 aa).

The ABC transporter domain occupies 6-251; it reads VKHLTITDTW…PEHVYTKYLL (246 aa). 38-45 provides a ligand contact to ATP; that stretch reads GESGSGKS.

It belongs to the ABC transporter superfamily. In terms of assembly, the complex is composed of two ATP-binding proteins (CntD and CntF), two transmembrane proteins (CntB and CntC) and a solute-binding protein (CntA).

It is found in the cell membrane. Its function is as follows. Part of the ABC transporter complex CntABCDF (Opp1) involved in the uptake of metal in complex with the metallophore staphylopine (StP). May be involved in the import of a large array of divalent metals ions such as nickel, cobalt, zinc, copper and iron. Probably responsible for energy coupling to the transport system. The polypeptide is Metal-staphylopine import system ATP-binding protein CntD (Staphylococcus aureus (strain Mu50 / ATCC 700699)).